Reading from the N-terminus, the 81-residue chain is uncharacterized protein (81 aa).

This is an uncharacterized protein from Saccharomyces cerevisiae (strain ATCC 204508 / S288c) (Baker's yeast).